Here is a 349-residue protein sequence, read N- to C-terminus: Probable dual-specificity RNA methyltransferase RlmN (349 aa).

E94 (proton acceptor) is an active-site residue. The region spanning 100–334 is the Radical SAM core domain; that stretch reads TETRTTACVS…VKVRRSRGKD (235 aa). C107 and C339 are oxidised to a cystine. 3 residues coordinate [4Fe-4S] cluster: C114, C118, and C121. S-adenosyl-L-methionine-binding positions include 165 to 166, S197, 220 to 222, and N296; these read GE and SLH. Catalysis depends on C339, which acts as the S-methylcysteine intermediate.

Belongs to the radical SAM superfamily. RlmN family. Requires [4Fe-4S] cluster as cofactor.

It localises to the cytoplasm. The enzyme catalyses adenosine(2503) in 23S rRNA + 2 reduced [2Fe-2S]-[ferredoxin] + 2 S-adenosyl-L-methionine = 2-methyladenosine(2503) in 23S rRNA + 5'-deoxyadenosine + L-methionine + 2 oxidized [2Fe-2S]-[ferredoxin] + S-adenosyl-L-homocysteine. It carries out the reaction adenosine(37) in tRNA + 2 reduced [2Fe-2S]-[ferredoxin] + 2 S-adenosyl-L-methionine = 2-methyladenosine(37) in tRNA + 5'-deoxyadenosine + L-methionine + 2 oxidized [2Fe-2S]-[ferredoxin] + S-adenosyl-L-homocysteine. Its function is as follows. Specifically methylates position 2 of adenine 2503 in 23S rRNA and position 2 of adenine 37 in tRNAs. The chain is Probable dual-specificity RNA methyltransferase RlmN from Flavobacterium johnsoniae (strain ATCC 17061 / DSM 2064 / JCM 8514 / BCRC 14874 / CCUG 350202 / NBRC 14942 / NCIMB 11054 / UW101) (Cytophaga johnsonae).